The chain runs to 508 residues: Protein FAM227B (508 aa).

Disordered stretches follow at residues 1–22 (MAGQ…MQEP) and 485–508 (ASLS…EEEY). Low complexity predominate over residues 486–497 (SLSSSSSSSPSS).

Belongs to the FAM227 family.

This Homo sapiens (Human) protein is Protein FAM227B (FAM227B).